The sequence spans 523 residues: 2-hydroxyisoflavanone synthase (523 aa).

Residues 2–22 (LVELAITLLVIALFIHLRPTL) form a helical membrane-spanning segment. Cysteine 450 is a heme binding site.

It belongs to the cytochrome P450 family. Heme serves as cofactor.

Its subcellular location is the microsome membrane. It catalyses the reaction (2S)-liquiritigenin + reduced [NADPH--hemoprotein reductase] + O2 = (2R,3S)-2,4',7-trihydroxyisoflavanone + oxidized [NADPH--hemoprotein reductase] + H2O + H(+). It carries out the reaction (2S)-naringenin + reduced [NADPH--hemoprotein reductase] + O2 = 2-hydroxy-2,3-dihydrogenistein + oxidized [NADPH--hemoprotein reductase] + H2O + H(+). 2-hydroxyisoflavanone synthase, which catalyzes the hydroxylation associated with 1,2-aryl migration of flavanones. Converts liquiritigenin and naringenin into highly unstable precursors of the isoflavones daidzein and genistein. Acts only on substrates with (2S)-chirality. The polypeptide is 2-hydroxyisoflavanone synthase (CYP93C2) (Glycyrrhiza echinata (Licorice)).